We begin with the raw amino-acid sequence, 1185 residues long: 205 kDa microtubule-associated protein (1185 aa).

Positions E146 to Q159 are enriched in low complexity. The disordered stretch occupies residues E146 to P196. Polar residues predominate over residues S179–P196. Phosphoserine occurs at positions 354 and 448. The residue at position 450 (Y450) is a Phosphotyrosine. Phosphoserine is present on residues S709, S710, and S712. At T721 the chain carries Phosphothreonine. Residue S728 is modified to Phosphoserine. The interval T745–T977 is microtubule-binding. Low complexity predominate over residues S856 to S866. Disordered regions lie at residues S856 to A1035 and S1054 to A1114. 2 stretches are compositionally biased toward polar residues: residues L867 to S881 and T908 to A936. Phosphoserine is present on S874. A compositionally biased stretch (low complexity) spans A940–A952. The span at P989–V999 shows a compositional bias: polar residues. Over residues P1003–P1015 the composition is skewed to low complexity. Polar residues-rich tracts occupy residues N1016–N1026 and S1054–R1066. Residues S1075 and S1086 each carry the phosphoserine modification. Polar residues predominate over residues L1100–S1111. Position 1121 is a phosphoserine (S1121).

The protein localises to the cytoplasm. Its subcellular location is the cytoskeleton. It is found in the spindle. May play an important role in the regulation of microtubule assembly and interaction. The protein is 205 kDa microtubule-associated protein (Map205) of Drosophila melanogaster (Fruit fly).